The sequence spans 422 residues: Probable biofilm formation methyltransferase WspC (422 aa).

The region spanning 1–264 (MNDRFERLLK…LSFVFRRTSE (264 aa)) is the CheR-type methyltransferase domain. Residues Thr67, Arg71, Glu108, Asp132, 186–187 (NL), and 205–206 (RN) each bind S-adenosyl-L-methionine. The segment at 289–316 (ASIRPSPPPPAKPRQRLSSLVPPASGQP) is disordered. One copy of the TPR repeat lies at 354–387 (ATVFYWLGLLSDVAGQEQEAQDFYRKALYLEPQH).

As to quaternary structure, monomer.

Functionally, involved in biofilm formation. This Pseudomonas aeruginosa (strain ATCC 15692 / DSM 22644 / CIP 104116 / JCM 14847 / LMG 12228 / 1C / PRS 101 / PAO1) protein is Probable biofilm formation methyltransferase WspC (wspC).